A 375-amino-acid polypeptide reads, in one-letter code: Putative glycyl-radical enzyme activating enzyme MJ0021 (375 aa).

The region spanning 23 to 246 is the Radical SAM core domain; sequence QCVKGGKLVL…LKVIKEFKGD (224 aa). 3 residues coordinate [4Fe-4S] cluster: C38, C42, and C45. S-adenosyl-L-methionine-binding positions include 44 to 46 and G87; that span reads YCP.

The protein belongs to the organic radical-activating enzymes family. [4Fe-4S] cluster serves as cofactor.

The enzyme catalyses glycyl-[protein] + reduced [flavodoxin] + S-adenosyl-L-methionine = glycin-2-yl radical-[protein] + semiquinone [flavodoxin] + 5'-deoxyadenosine + L-methionine + H(+). This chain is Putative glycyl-radical enzyme activating enzyme MJ0021, found in Methanocaldococcus jannaschii (strain ATCC 43067 / DSM 2661 / JAL-1 / JCM 10045 / NBRC 100440) (Methanococcus jannaschii).